The following is a 525-amino-acid chain: GMP synthase [glutamine-hydrolyzing] (525 aa).

One can recognise a Glutamine amidotransferase type-1 domain in the interval 9–207 (RILILDFGSQ…ILDICGCEAL (199 aa)). The Nucleophile role is filled by Cys86. Active-site residues include His181 and Glu183. Residues 208–400 (WTPSKIAEDA…LGLPYDMVYR (193 aa)) form the GMPS ATP-PPase domain. 235–241 (SGGVDSS) is a binding site for ATP.

As to quaternary structure, homodimer.

It catalyses the reaction XMP + L-glutamine + ATP + H2O = GMP + L-glutamate + AMP + diphosphate + 2 H(+). The protein operates within purine metabolism; GMP biosynthesis; GMP from XMP (L-Gln route): step 1/1. Catalyzes the synthesis of GMP from XMP. The chain is GMP synthase [glutamine-hydrolyzing] from Pseudomonas savastanoi pv. phaseolicola (strain 1448A / Race 6) (Pseudomonas syringae pv. phaseolicola (strain 1448A / Race 6)).